A 320-amino-acid chain; its full sequence is MKKNLISNHIQLNDSGKLIHLLGLEGLSKQHLTHILDKADSLIDTSGNLKKSKALDDMSIANLFFEPSTRTRNTFEIAAMRSSANVINVDLANSALKKNEDLLDTMRTLKAMQIDMFVIRHKQNGLPHHVAKYLEGVSILNAGDGINAHPTQALLDMLSIRQHKKTFENLSVAIVGDIIHSRVAHSGIQALKTLGTTDIRLIAPKILQYNSEPCSEVSCFDDIEPGLKDCDVVIVLRLQKERMIEANIPNEQEYFNNFGLTPKRLALTKSDAIVMHPGPINRGVEIDSIVADGNQSIILQQVTDGIAIRMAVMQILANKS.

Carbamoyl phosphate-binding residues include Arg70 and Thr71. Residue Lys98 coordinates L-aspartate. 3 residues coordinate carbamoyl phosphate: Arg120, His149, and Gln152. Positions 182 and 237 each coordinate L-aspartate. Positions 278 and 279 each coordinate carbamoyl phosphate.

Belongs to the aspartate/ornithine carbamoyltransferase superfamily. ATCase family. In terms of assembly, heterododecamer (2C3:3R2) of six catalytic PyrB chains organized as two trimers (C3), and six regulatory PyrI chains organized as three dimers (R2).

It carries out the reaction carbamoyl phosphate + L-aspartate = N-carbamoyl-L-aspartate + phosphate + H(+). Its pathway is pyrimidine metabolism; UMP biosynthesis via de novo pathway; (S)-dihydroorotate from bicarbonate: step 2/3. Catalyzes the condensation of carbamoyl phosphate and aspartate to form carbamoyl aspartate and inorganic phosphate, the committed step in the de novo pyrimidine nucleotide biosynthesis pathway. This Vesicomyosocius okutanii subsp. Calyptogena okutanii (strain HA) protein is Aspartate carbamoyltransferase catalytic subunit.